The following is a 67-amino-acid chain: Large ribosomal subunit protein bL32 (67 aa).

Residues 1 to 44 (MAVQQNRKSPSKRDMRRSHDALGFSTLSTDSKSGERHRRHHVTK) form a disordered region. The segment covering 11–20 (SKRDMRRSHD) has biased composition (basic and acidic residues).

The protein belongs to the bacterial ribosomal protein bL32 family.

This is Large ribosomal subunit protein bL32 from Dichelobacter nodosus (strain VCS1703A).